Here is a 309-residue protein sequence, read N- to C-terminus: Probable porphobilinogen deaminase (309 aa).

C233 carries the S-(dipyrrolylmethanemethyl)cysteine modification.

It belongs to the HMBS family. It depends on dipyrromethane as a cofactor.

It catalyses the reaction 4 porphobilinogen + H2O = hydroxymethylbilane + 4 NH4(+). Its pathway is porphyrin-containing compound metabolism; protoporphyrin-IX biosynthesis; coproporphyrinogen-III from 5-aminolevulinate: step 2/4. In terms of biological role, tetrapolymerization of the monopyrrole PBG into the hydroxymethylbilane pre-uroporphyrinogen in several discrete steps. This Methanococcoides burtonii (strain DSM 6242 / NBRC 107633 / OCM 468 / ACE-M) protein is Probable porphobilinogen deaminase.